The primary structure comprises 207 residues: Thymidine kinase (207 aa).

ATP-binding positions include 15-22 (GCMFSGKS) and 88-91 (DEIQ). Residue Glu89 is the Proton acceptor of the active site. Zn(2+) is bound by residues Cys145, Cys148, Cys183, and His186. Basic residues predominate over residues 184 to 198 (RHHHEVPGKPKKRYN). Positions 184 to 207 (RHHHEVPGKPKKRYNHPLAGHTGE) are disordered.

Belongs to the thymidine kinase family. In terms of assembly, homotetramer.

The protein resides in the cytoplasm. The catalysed reaction is thymidine + ATP = dTMP + ADP + H(+). This is Thymidine kinase from Geobacillus kaustophilus (strain HTA426).